The following is a 611-amino-acid chain: Putative type II restriction enzyme HgiDII (611 aa).

The segment covering 355 to 364 (YPSNPKKEEV) has biased composition (basic and acidic residues). Residues 355–434 (YPSNPKKEEV…PEPSPPPKQE (80 aa)) form a disordered region. Residues 381 to 409 (TNASSDSSTATENASSDSSTATENASSET) are compositionally biased toward low complexity. 2 consecutive repeat copies span residues 382–392 (NASSDSSTATE) and 393–403 (NASSDSSTATE). The 2.5 X 11 AA tandem repeats stretch occupies residues 382-403 (NASSDSSTATENASSDSSTATE). The 3; truncated repeat unit spans residues 404-409 (NASSET). The segment covering 410–425 (NDGEVEDNSFFDDDIP) has biased composition (acidic residues).

The catalysed reaction is Endonucleolytic cleavage of DNA to give specific double-stranded fragments with terminal 5'-phosphates.. In terms of biological role, according to REBASE this is a P subtype restriction enzyme that recognizes the double-stranded sequence 5'-GTCGAC-3' and cleaves after G-1. No restriction activity was detected upon overexpressing this protein in E.coli. The protein is Putative type II restriction enzyme HgiDII of Herpetosiphon aurantiacus (Herpetosiphon giganteus).